The primary structure comprises 177 residues: NADH-quinone oxidoreductase subunit B (177 aa).

4 residues coordinate [4Fe-4S] cluster: Cys-56, Cys-57, Cys-121, and Cys-151.

This sequence belongs to the complex I 20 kDa subunit family. In terms of assembly, NDH-1 is composed of 14 different subunits. Subunits NuoB, C, D, E, F, and G constitute the peripheral sector of the complex. The cofactor is [4Fe-4S] cluster.

The protein resides in the cell inner membrane. It carries out the reaction a quinone + NADH + 5 H(+)(in) = a quinol + NAD(+) + 4 H(+)(out). In terms of biological role, NDH-1 shuttles electrons from NADH, via FMN and iron-sulfur (Fe-S) centers, to quinones in the respiratory chain. Couples the redox reaction to proton translocation (for every two electrons transferred, four hydrogen ions are translocated across the cytoplasmic membrane), and thus conserves the redox energy in a proton gradient. The protein is NADH-quinone oxidoreductase subunit B of Ruegeria pomeroyi (strain ATCC 700808 / DSM 15171 / DSS-3) (Silicibacter pomeroyi).